Consider the following 690-residue polypeptide: Protein O-mannosyl-transferase F38B6.6 (690 aa).

Residues 1-24 form a disordered region; the sequence is MKKHLHHKVSGSCDPGDRSPKEKG. The Cytoplasmic segment spans residues 1 to 32; sequence MKKHLHHKVSGSCDPGDRSPKEKGRSQGIRNL. A compositionally biased stretch (basic and acidic residues) spans 15–24; the sequence is PGDRSPKEKG. The helical transmembrane segment at 33 to 53 threads the bilayer; it reads LILISLSIIPYLSCLGGDFVF. The Extracellular portion of the chain corresponds to 54–110; the sequence is DDAESIVNNPIVNGKDPLLQIFSRDFWGRSISSSNSHKSYRPVTTFTFWLNYKLHET. Residues 111–131 traverse the membrane as a helical segment; that stretch reads STLGYHVVNIICHTVATLVFY. The Cytoplasmic segment spans residues 132 to 138; that stretch reads KLGKQLE. A helical transmembrane segment spans residues 139–159; it reads HIFDFFNIAFSASILFAVHPV. The Extracellular segment spans residues 160-166; sequence HTEAVAN. N-linked (GlcNAc...) asparagine glycosylation is present at N166. A helical membrane pass occupies residues 167–187; that stretch reads ITGRAELLMTIFSLAALILHV. Over 188–234 the chain is Cytoplasmic; the sequence is KNREINCKFVLLVILSTLSKEQGLMTIPIAICIDFLAHRSCRSNFVR. Residues 235–255 form a helical membrane-spanning segment; sequence MICLLVAIGFLRMMVNGFEAA. The Extracellular portion of the chain corresponds to 256–273; sequence KFTKLDNPTAFLNSKFYR. Residues 274–294 form a helical membrane-spanning segment; it reads MINYTYIWLYHAYLLVIPVNL. Topologically, residues 295–307 are cytoplasmic; sequence CFDYSMGCISSIT. The chain crosses the membrane as a helical span at residues 308–328; the sequence is TMWDLRALSPVLIFTIVIIGV. Over 329–341 the chain is Extracellular; the sequence is KFQNECRAFTLSS. The helical transmembrane segment at 342-362 threads the bilayer; the sequence is LMGIISFLPASNIFFTVGFSI. The Cytoplasmic segment spans residues 363–365; the sequence is AER. The helical transmembrane segment at 366 to 386 threads the bilayer; it reads VLYLPSAGFCLLCAIIFKKLS. Over 387–690 the chain is Extracellular; the sequence is VHFKNADVLS…EHNCYNSTLP (304 aa). 5 TPR repeats span residues 398 to 431, 432 to 465, 466 to 499, 500 to 533, and 534 to 567; these read TLIL…CPTN, AKIH…DPSY, EQAL…RPSF, AVAW…RPNS, and AHCL…DPSH. N-linked (GlcNAc...) asparagine glycans are attached at residues N559, N600, and N617. 2 TPR repeats span residues 602 to 635 and 636 to 669; these read SRVH…NPTS and VLFH…DSKN. N-linked (GlcNAc...) asparagine glycosylation occurs at N686.

This sequence belongs to the TMTC family.

The protein localises to the membrane. It is found in the endoplasmic reticulum. It carries out the reaction a di-trans,poly-cis-dolichyl beta-D-mannosyl phosphate + L-seryl-[protein] = 3-O-(alpha-D-mannosyl)-L-seryl-[protein] + a di-trans,poly-cis-dolichyl phosphate + H(+). It catalyses the reaction a di-trans,poly-cis-dolichyl beta-D-mannosyl phosphate + L-threonyl-[protein] = 3-O-(alpha-D-mannosyl)-L-threonyl-[protein] + a di-trans,poly-cis-dolichyl phosphate + H(+). The protein operates within protein modification; protein glycosylation. In terms of biological role, transfers mannosyl residues to the hydroxyl group of serine or threonine residues. This chain is Protein O-mannosyl-transferase F38B6.6, found in Caenorhabditis elegans.